A 248-amino-acid polypeptide reads, in one-letter code: 3-deoxy-manno-octulosonate cytidylyltransferase (248 aa).

The protein belongs to the KdsB family.

Its subcellular location is the cytoplasm. It carries out the reaction 3-deoxy-alpha-D-manno-oct-2-ulosonate + CTP = CMP-3-deoxy-beta-D-manno-octulosonate + diphosphate. It participates in nucleotide-sugar biosynthesis; CMP-3-deoxy-D-manno-octulosonate biosynthesis; CMP-3-deoxy-D-manno-octulosonate from 3-deoxy-D-manno-octulosonate and CTP: step 1/1. Its pathway is bacterial outer membrane biogenesis; lipopolysaccharide biosynthesis. In terms of biological role, activates KDO (a required 8-carbon sugar) for incorporation into bacterial lipopolysaccharide in Gram-negative bacteria. This chain is 3-deoxy-manno-octulosonate cytidylyltransferase, found in Salmonella agona (strain SL483).